Here is a 1094-residue protein sequence, read N- to C-terminus: MAARQAVGSGAQETCGLDRILEALKLLLSPGGSGSSSLQVTKHDVLLATLKSNLSALEDKFLKDPQWKNLKLLRDEIADKAEWPQNSVDVTWSFTSQTLLLLLCLKETMIRLAANFNPGKPNPRTPEVAPALSPDALSISQQKTVQFVLQFVVTLGICPYLMPGVGVPLRYRTEFGAVVQDVVCFDAAPDATRRLYTSCKALLNVAQHTSLGSLIFCHHFGDIAAGLCQLGFCPTKRKLLTPAEEVLTEEERTLSRGALRDMLDQVYQPLAVRELLILQGGPPQSCTDVKTQMRCRAPAWLRRLCGQLLSERLMRPNGVQAVVRGILEGAGAGAAGGSDAEVTAADWKKCDLIAKILASCPQQSLSPENYYRDICPQVLDLFHFQDKLTARQFQRVATTTFITLSRERPHLAAKYLLQPVLAPLHRCLNTAELSESDMVPGTILVTEEELSRCIEDVFKVYVVGNEPLTVLMDSLLPVLGVLFLLYCFTKQSVSHIRSLCQEILLWILGKLERKKAIASLKGFAGLDKAVPSLHSLCQFRVATQGGIMITIKEAISDEDEDEALYQKVSSEQGRVEHLGDLLSHCQECGLAGDFFIFCLKELTHVASENETELKTEPFSSKSLLELEQHQTLLVEGQERKLLVLQLMAVLCERMSEQIFTNVTQVVDFVAATLQRACASLAHQAESTVESQTLSMSMGLVAVMLGGAVQLKSSDFAVLKQLLPLLEKVSNTYPDPVIQELAVDLRITISTHGAFATEAVSMAAQSTLNRKDLEGKIEEQQQTSHERPTDVAHSHLEQQQSHETAPQTGLQSNAPIIPQGVNEPSTTTSQKSGSVTTEQLQEVLLSAYDPQIPTRAAALRTLSHWIEQREAKALEMQEKLLKIFLENLEHEDTFVYLSAIQGVALLSDVYPEKILPDLLAQYDSSKDKHTPETRMKVGEVLMRIVRALGDMVSKYREPLIHTFLRGVRDPDGAHRASSLANLGELCQRLDFLLGSVVHEVTACLIAVAKTDGEVQVRRAAIHVVVLLLRGLSQKATEVLSAVLKDLYHLLKHVVCLEPDDVAKLHAQLALEELDDIMKNFLFPPQKLEKKIMVLP.

Residues 468-488 (LTVLMDSLLPVLGVLFLLYCF) traverse the membrane as a helical segment. Position 556 is a phosphoserine (Ser556). Residues 777 to 795 (EEQQQTSHERPTDVAHSHL) show a composition bias toward basic and acidic residues. The interval 777–834 (EEQQQTSHERPTDVAHSHLEQQQSHETAPQTGLQSNAPIIPQGVNEPSTTTSQKSGSV) is disordered. Polar residues-rich tracts occupy residues 796-813 (EQQQ…QSNA) and 821-834 (NEPS…SGSV). HEAT repeat units lie at residues 873 to 909 (LEMQ…SDVY) and 952 to 988 (SKYR…CQRL).

The protein belongs to the Tango6 family.

Its subcellular location is the membrane. This chain is Transport and Golgi organization protein 6 homolog (TANGO6), found in Homo sapiens (Human).